A 121-amino-acid chain; its full sequence is Small ribosomal subunit protein uS13 (121 aa).

Residues 94–121 (GLPVRGQNTKNNSRTRKGPRRTVANKKK) form a disordered region. Over residues 106–121 (SRTRKGPRRTVANKKK) the composition is skewed to basic residues.

Belongs to the universal ribosomal protein uS13 family. In terms of assembly, part of the 30S ribosomal subunit. Forms a loose heterodimer with protein S19. Forms two bridges to the 50S subunit in the 70S ribosome.

Located at the top of the head of the 30S subunit, it contacts several helices of the 16S rRNA. In the 70S ribosome it contacts the 23S rRNA (bridge B1a) and protein L5 of the 50S subunit (bridge B1b), connecting the 2 subunits; these bridges are implicated in subunit movement. Contacts the tRNAs in the A and P-sites. In Halalkalibacterium halodurans (strain ATCC BAA-125 / DSM 18197 / FERM 7344 / JCM 9153 / C-125) (Bacillus halodurans), this protein is Small ribosomal subunit protein uS13.